A 368-amino-acid polypeptide reads, in one-letter code: Cytochrome P450 119 (368 aa).

Positions 76, 80, 257, 259, 315, and 317 each coordinate heme.

Belongs to the cytochrome P450 family. Heme is required as a cofactor.

It localises to the cytoplasm. It catalyses the reaction 2 a phenolic donor + H2O2 = 2 a phenolic radical donor + 2 H2O. Functionally, the endogenous substrate is not known. In vitro, catalyzes the H(2)O(2)-dependent epoxidation of styrene, cis-beta-methylstyrene, and cis-stilbene with retention of stereochemistry. Is able to use cumene hydroperoxide (CHP) or tert-butyl hydroperoxide (TBHP) instead of H(2)O(2) as the electron acceptor. Can also hydroxylate fatty acids such as lauric acid. The sequence is that of Cytochrome P450 119 (cyp119) from Sulfolobus acidocaldarius (strain ATCC 33909 / DSM 639 / JCM 8929 / NBRC 15157 / NCIMB 11770).